We begin with the raw amino-acid sequence, 598 residues long: Elongation factor 4 (598 aa).

Residues 5-187 form the tr-type G domain; that stretch reads SHIRNFSIIA…RLVATIPAPI (183 aa). Residues 17–22 and 134–137 each bind GTP; these read DHGKST and NKID.

It belongs to the TRAFAC class translation factor GTPase superfamily. Classic translation factor GTPase family. LepA subfamily.

It is found in the cell inner membrane. It catalyses the reaction GTP + H2O = GDP + phosphate + H(+). Functionally, required for accurate and efficient protein synthesis under certain stress conditions. May act as a fidelity factor of the translation reaction, by catalyzing a one-codon backward translocation of tRNAs on improperly translocated ribosomes. Back-translocation proceeds from a post-translocation (POST) complex to a pre-translocation (PRE) complex, thus giving elongation factor G a second chance to translocate the tRNAs correctly. Binds to ribosomes in a GTP-dependent manner. This is Elongation factor 4 from Pseudomonas fluorescens (strain Pf0-1).